We begin with the raw amino-acid sequence, 1126 residues long: Carbamoyl phosphate synthase large chain (1126 aa).

The segment at 1 to 402 (MPKRTDIKSV…SLGKAMRSID (402 aa)) is carboxyphosphate synthetic domain. ATP-binding residues include Arg129, Arg169, Gly175, Gly176, Glu208, Ile210, Glu215, Gly241, Val242, His243, Gln285, and Glu299. The region spanning 133–328 (KKVVEEAGAE…IAKIATKLAL (196 aa)) is the ATP-grasp 1 domain. Mg(2+)-binding residues include Gln285, Glu299, and Asn301. Mn(2+) contacts are provided by Gln285, Glu299, and Asn301. Residues 403 to 551 (KRHMGFNWDG…YYYSCYADET (149 aa)) are oligomerization domain. The tract at residues 552–962 (ELRPRDREAV…AFAKSQLAAY (411 aa)) is carbamoyl phosphate synthetic domain. One can recognise an ATP-grasp 2 domain in the interval 681–881 (GEVLKKADMN…LAKAAARIMV (201 aa)). Residues Arg717, Lys765, Leu767, Glu772, Gly797, Val798, His799, Ser800, Gln840, and Glu852 each contribute to the ATP site. Positions 840, 852, and 854 each coordinate Mg(2+). Mn(2+) is bound by residues Gln840, Glu852, and Asn854. Residues 963–1126 (EGGLPTSGNV…TQLFELESRD (164 aa)) are allosteric domain. The 163-residue stretch at 964-1126 (GGLPTSGNVF…TQLFELESRD (163 aa)) folds into the MGS-like domain.

This sequence belongs to the CarB family. As to quaternary structure, composed of two chains; the small (or glutamine) chain promotes the hydrolysis of glutamine to ammonia, which is used by the large (or ammonia) chain to synthesize carbamoyl phosphate. Tetramer of heterodimers (alpha,beta)4. Mg(2+) serves as cofactor. The cofactor is Mn(2+).

The catalysed reaction is hydrogencarbonate + L-glutamine + 2 ATP + H2O = carbamoyl phosphate + L-glutamate + 2 ADP + phosphate + 2 H(+). The enzyme catalyses hydrogencarbonate + NH4(+) + 2 ATP = carbamoyl phosphate + 2 ADP + phosphate + 2 H(+). The protein operates within amino-acid biosynthesis; L-arginine biosynthesis; carbamoyl phosphate from bicarbonate: step 1/1. Its pathway is pyrimidine metabolism; UMP biosynthesis via de novo pathway; (S)-dihydroorotate from bicarbonate: step 1/3. Large subunit of the glutamine-dependent carbamoyl phosphate synthetase (CPSase). CPSase catalyzes the formation of carbamoyl phosphate from the ammonia moiety of glutamine, carbonate, and phosphate donated by ATP, constituting the first step of 2 biosynthetic pathways, one leading to arginine and/or urea and the other to pyrimidine nucleotides. The large subunit (synthetase) binds the substrates ammonia (free or transferred from glutamine from the small subunit), hydrogencarbonate and ATP and carries out an ATP-coupled ligase reaction, activating hydrogencarbonate by forming carboxy phosphate which reacts with ammonia to form carbamoyl phosphate. This chain is Carbamoyl phosphate synthase large chain, found in Bifidobacterium adolescentis (strain ATCC 15703 / DSM 20083 / NCTC 11814 / E194a).